The following is a 285-amino-acid chain: Meiotically up-regulated gene 125 protein (285 aa).

The protein localises to the cytoplasm. The protein resides in the nucleus. Its function is as follows. Has a role in meiosis. This Schizosaccharomyces pombe (strain 972 / ATCC 24843) (Fission yeast) protein is Meiotically up-regulated gene 125 protein (mug125).